The chain runs to 588 residues: Putative pentatricopeptide repeat-containing protein At5g52630 (588 aa).

PPR repeat units follow at residues 14 to 48, 49 to 79, 80 to 114, 115 to 149, 150 to 180, 181 to 215, 216 to 250, 251 to 281, 282 to 316, 317 to 351, and 352 to 386; these read NYNQ…GLSL, IPLV…SPQK, SSTT…NLRP, DDHV…GYDA, DVFV…MPQR, NVVT…NLAV, NDYS…SFDS, SSFV…VPVK, NLGI…GMKP, NFIT…RIEP, and TDKH…PTES. Positions 387–462 are type E motif; sequence VWGALLTSCT…ETGLSWVEER (76 aa). The interval 463–493 is type E(+) motif; sequence NKVHTFAAGERRHEKSKEIYEKLAELGEEME. The type DYW motif stretch occupies residues 494-588; that stretch reads KAGYIADTSY…DGKCSCNDYW (95 aa).

It belongs to the PPR family. PCMP-H subfamily.

The polypeptide is Putative pentatricopeptide repeat-containing protein At5g52630 (PCMP-H52) (Arabidopsis thaliana (Mouse-ear cress)).